Reading from the N-terminus, the 267-residue chain is L-aspartate dehydrogenase (267 aa).

Positions 124 and 190 each coordinate NAD(+). His-220 is a catalytic residue.

This sequence belongs to the L-aspartate dehydrogenase family.

The catalysed reaction is L-aspartate + NADP(+) + H2O = oxaloacetate + NH4(+) + NADPH + H(+). It carries out the reaction L-aspartate + NAD(+) + H2O = oxaloacetate + NH4(+) + NADH + H(+). It participates in cofactor biosynthesis; NAD(+) biosynthesis; iminoaspartate from L-aspartate (dehydrogenase route): step 1/1. Functionally, specifically catalyzes the NAD or NADP-dependent dehydrogenation of L-aspartate to iminoaspartate. This is L-aspartate dehydrogenase from Pseudomonas aeruginosa (strain ATCC 15692 / DSM 22644 / CIP 104116 / JCM 14847 / LMG 12228 / 1C / PRS 101 / PAO1).